The following is a 180-amino-acid chain: Negative modulator of initiation of replication (180 aa).

Positions A87–V88 are interaction with DNA.

Belongs to the SeqA family. As to quaternary structure, homodimer. Polymerizes to form helical filaments.

It is found in the cytoplasm. Its function is as follows. Negative regulator of replication initiation, which contributes to regulation of DNA replication and ensures that replication initiation occurs exactly once per chromosome per cell cycle. Binds to pairs of hemimethylated GATC sequences in the oriC region, thus preventing assembly of replication proteins and re-initiation at newly replicated origins. Repression is relieved when the region becomes fully methylated. This is Negative modulator of initiation of replication from Ferrimonas balearica (strain DSM 9799 / CCM 4581 / KCTC 23876 / PAT).